The sequence spans 464 residues: Asparagine--tRNA ligase (464 aa).

This sequence belongs to the class-II aminoacyl-tRNA synthetase family. In terms of assembly, homodimer.

The protein resides in the cytoplasm. The enzyme catalyses tRNA(Asn) + L-asparagine + ATP = L-asparaginyl-tRNA(Asn) + AMP + diphosphate + H(+). The sequence is that of Asparagine--tRNA ligase from Xanthomonas euvesicatoria pv. vesicatoria (strain 85-10) (Xanthomonas campestris pv. vesicatoria).